Reading from the N-terminus, the 343-residue chain is tRNA N6-adenosine threonylcarbamoyltransferase (343 aa).

H115 and H119 together coordinate Fe cation. Substrate is bound by residues 138–142, D171, G184, and N276; that span reads LVSGA. Residue D304 participates in Fe cation binding.

Belongs to the KAE1 / TsaD family. Fe(2+) is required as a cofactor.

The protein resides in the cytoplasm. The catalysed reaction is L-threonylcarbamoyladenylate + adenosine(37) in tRNA = N(6)-L-threonylcarbamoyladenosine(37) in tRNA + AMP + H(+). In terms of biological role, required for the formation of a threonylcarbamoyl group on adenosine at position 37 (t(6)A37) in tRNAs that read codons beginning with adenine. Is involved in the transfer of the threonylcarbamoyl moiety of threonylcarbamoyl-AMP (TC-AMP) to the N6 group of A37, together with TsaE and TsaB. TsaD likely plays a direct catalytic role in this reaction. In Buchnera aphidicola subsp. Cinara cedri (strain Cc), this protein is tRNA N6-adenosine threonylcarbamoyltransferase.